A 708-amino-acid chain; its full sequence is MSPWQPLLLVLLALGYSFAAPHQRQPTYVVFPRDLKTSNLTDTQLAEDYLYRYGYTRAAQMMGEKQSLRPALLMLQKQLSLPQTGELDSETLKAIRSPRCGVPDVGKFQTFDGDLKWHHHNITYWIQSYTEDLPRDVIDDSFARAFAVWSAVTPLTFTRVYGLEADIVIQFGVAEHGDGYPFDGKDGLLAHAFPPGPGIQGDAHFDDDELWSLGKGAVVPTYFGNANGAPCHFPFTFEGRSYLSCTTDGRNDGKPWCGTTADYDTDRKYGFCPSENLYTEHGNGDGKPCVFPFIFEGHSYSACTTKGRSDGYRWCATTANYDQDKADGFCPTRADVTVTGGNSAGEMCVFPFVFLGKQYSTCTSEGRSDGRLWCATTSNFDADKKWGFCPDQGYSLFLVAAHEFGHALGLDHSSVPEALMYPMYHYHEDSPLHEDDIKGIHHLYGRGSKPDPRPPATTAAEPQPTAPPTMCSTAPPMAYPTGGPTVAPTGAPSPGPTGPPTAGPSEAPTESSTPDDNPCNVDVFDAIADIQGALHFFKDGRYWKFSNHGGNQLQGPFLIARTWPAFPSKLNSAFEDPQPKKIFFFLWAQMWVYTGQSVLGPRSLDKLGLGSEVTLVTGLLPRRGGKALLISRERIWKFDLKSQKVDPQSVTRLDNEFSGVPWNSHNVFQYQDKAYFCHDKYFWRVSFHNRVNQVDHVAYVTYDLLQCP.

The signal sequence occupies residues 1–19 (MSPWQPLLLVLLALGYSFA). The propeptide at 20–107 (APHQRQPTYV…PRCGVPDVGK (88 aa)) is activation peptide. A glycan (N-linked (GlcNAc...) asparagine) is linked at N39. The Cysteine switch signature appears at 98 to 105 (PRCGVPDV). Residue C100 coordinates Zn(2+). N121 carries an N-linked (GlcNAc...) asparagine glycan. Ca(2+)-binding residues include D132 and D166. Zn(2+) contacts are provided by H176 and D178. The Ca(2+) site is built by D183, G184, D186, and L188. H191 is a Zn(2+) binding site. The Ca(2+) site is built by G198, Q200, and D202. Zn(2+) is bound at residue H204. D206, D207, and E209 together coordinate Ca(2+). Fibronectin type-II domains lie at 226–274 (ANGA…FCPS), 284–332 (GDGK…FCPT), and 343–391 (SAGE…FCPD). Intrachain disulfides connect C231-C257, C245-C272, C289-C315, C303-C330, C348-C374, and C362-C389. Residue H402 participates in Zn(2+) binding. E403 is a catalytic residue. Zn(2+) contacts are provided by H406 and H412. The tract at residues 441-520 (HHLYGRGSKP…SSTPDDNPCN (80 aa)) is disordered. A compositionally biased stretch (low complexity) spans 480-490 (PTGGPTVAPTG). Pro residues predominate over residues 491-502 (APSPGPTGPPTA). C519 and C707 are oxidised to a cystine. 4 Hemopexin repeats span residues 521-566 (VDVF…WPAF), 567-611 (PSKL…GLGS), 613-660 (VTLV…FSGV), and 661-707 (PWNS…LLQC).

This sequence belongs to the peptidase M10A family. Exists as monomer or homodimer; disulfide-linked. Also exists as heterodimer with LCN2. Macrophages and transformed cell lines produce only the monomeric form. Interacts with ECM1. Zn(2+) serves as cofactor. It depends on Ca(2+) as a cofactor. N- and O-glycosylated.

The protein resides in the secreted. It localises to the extracellular space. It is found in the extracellular matrix. The enzyme catalyses Cleavage of gelatin types I and V and collagen types IV and V.. Matrix metalloproteinase that plays an essential role in local proteolysis of the extracellular matrix and in leukocyte migration. Could play a role in bone osteoclastic resorption. Cleaves KiSS1 at a Gly-|-Leu bond. Cleaves NINJ1 to generate the Secreted ninjurin-1 form. Cleaves type IV and type V collagen into large C-terminal three quarter fragments and shorter N-terminal one quarter fragments. Degrades fibronectin but not laminin or Pz-peptide. The chain is Matrix metalloproteinase-9 (Mmp9) from Rattus norvegicus (Rat).